The primary structure comprises 127 residues: Longitudinals lacking protein-like (127 aa).

The BTB domain occupies 33-98; the sequence is TDVTLACEGQ…MYAGEVNVSQ (66 aa).

As to quaternary structure, the BTB domain interacts with the BTB domain of Trl in vitro. Found in a Pc-containing complex.

It is found in the nucleus. Required, together with Trl, for maintaining the repressed state of target genes including homeotic genes Scr and Ubx. May also be involved in the activation of homeotic genes. Binds to a DNA Polycomb response element (PRE) at the bithorax complex. Also binds to polytene chromosomes at several hundred sites, many of which are shared with Trl and ph-p. Required during embryonic development. The chain is Longitudinals lacking protein-like from Drosophila melanogaster (Fruit fly).